A 476-amino-acid polypeptide reads, in one-letter code: Sulfate adenylyltransferase subunit 1 (476 aa).

In terms of domain architecture, tr-type G spans 25 to 241 (KSLLRFLTCG…LETVEVQRVV (217 aa)). A G1 region spans residues 34 to 41 (GSVDDGKS). Residue 34–41 (GSVDDGKS) participates in GTP binding. The tract at residues 92–96 (GITID) is G2. The G3 stretch occupies residues 113 to 116 (DTPG). GTP contacts are provided by residues 113-117 (DTPGH) and 168-171 (NKMD). The G4 stretch occupies residues 168 to 171 (NKMD). A G5 region spans residues 206-208 (SAL).

This sequence belongs to the TRAFAC class translation factor GTPase superfamily. Classic translation factor GTPase family. CysN/NodQ subfamily. In terms of assembly, heterodimer composed of CysD, the smaller subunit, and CysN.

The catalysed reaction is sulfate + ATP + H(+) = adenosine 5'-phosphosulfate + diphosphate. It participates in sulfur metabolism; hydrogen sulfide biosynthesis; sulfite from sulfate: step 1/3. In terms of biological role, with CysD forms the ATP sulfurylase (ATPS) that catalyzes the adenylation of sulfate producing adenosine 5'-phosphosulfate (APS) and diphosphate, the first enzymatic step in sulfur assimilation pathway. APS synthesis involves the formation of a high-energy phosphoric-sulfuric acid anhydride bond driven by GTP hydrolysis by CysN coupled to ATP hydrolysis by CysD. The protein is Sulfate adenylyltransferase subunit 1 of Erwinia tasmaniensis (strain DSM 17950 / CFBP 7177 / CIP 109463 / NCPPB 4357 / Et1/99).